We begin with the raw amino-acid sequence, 623 residues long: UvrABC system protein C (623 aa).

Positions 12-91 constitute a GIY-YIG domain; the sequence is PSPGVYLMKS…IKQHRPKYNI (80 aa). A UVR domain is found at 201-236; that stretch reads TEVARLYRSKMNLAAEQMRYEDAARYRDLLRAIEVT. Residues 603 to 623 form a disordered region; sequence RLHGSPLPNPPPPGEGAMDRK.

Belongs to the UvrC family. Interacts with UvrB in an incision complex.

The protein localises to the cytoplasm. Its function is as follows. The UvrABC repair system catalyzes the recognition and processing of DNA lesions. UvrC both incises the 5' and 3' sides of the lesion. The N-terminal half is responsible for the 3' incision and the C-terminal half is responsible for the 5' incision. The protein is UvrABC system protein C of Citrifermentans bemidjiense (strain ATCC BAA-1014 / DSM 16622 / JCM 12645 / Bem) (Geobacter bemidjiensis).